The primary structure comprises 507 residues: Hippocampus abundant transcript-like protein 1 (507 aa).

Residues 1–22 (MSTDGESPEEPGWKAVASPKAS) form a disordered region. The Extracellular segment spans residues 1–51 (MSTDGESPEEPGWKAVASPKASAMPEKRGSAQAASSSWLQGFGQPSVYHAA). Residues 52–72 (FVIFFEFFAWGLLTTPMLTVL) form a helical membrane-spanning segment. At 73-84 (HETFPQHTFLMN) the chain is on the cytoplasmic side. Residues 85–105 (GLIQGVKGLLSFLSAPLIGAL) form a helical membrane-spanning segment. Topologically, residues 106–113 (SDVWGRKP) are extracellular. The chain crosses the membrane as a helical span at residues 114–134 (FLLGTVFFTCFPIPLMRISPW). Residues 135–136 (WY) lie on the Cytoplasmic side of the membrane. The chain crosses the membrane as a helical span at residues 137–157 (FGMISVSGVFSVTFSVIFAYV). Residues 158–170 (ADFTQEHERSTAY) are Extracellular-facing. Residues 171–191 (GWVSATFAASLVSSPAIGTYL) form a helical membrane-spanning segment. The Cytoplasmic segment spans residues 192-198 (SSNYGDS). The helical transmembrane segment at 199–219 (LVVLVATVVALLDICFILVAV) threads the bilayer. Over 220–257 (PESLPEKIRPASWGAQISWKQADPFASLKKVGKDSTVL) the chain is Extracellular. Residues 258–278 (LICITVFLSYLPEAGQYSSFF) form a helical membrane-spanning segment. Topologically, residues 279 to 283 (LYLRQ) are cytoplasmic. A helical transmembrane segment spans residues 284–304 (VIGFGSVKIVAFIAMVGILSI). The Extracellular segment spans residues 305–323 (LAQTVFLSKLMRSLGNKNT). A helical transmembrane segment spans residues 324-344 (VLLGLGFQILQLAWYGFGAQA). Residues 345–347 (WMM) are Cytoplasmic-facing. A helical membrane pass occupies residues 348-368 (WAAGTVAAMSSITFPAVSALI). Residues 369–389 (SRNAESDQQGVAQGIITGIRG) lie on the Extracellular side of the membrane. Residues 390–410 (LCNGLGPALYGFIFYLFHVEL) traverse the membrane as a helical segment. Residues 411–430 (NELGPKLDSDNDPLQGAFIP) lie on the Cytoplasmic side of the membrane. A helical transmembrane segment spans residues 431–451 (GPPFLFGACIVLMSFLVALFI). Topologically, residues 452 to 507 (PEYRKTGGVQKHNNSISGSLSTPPERGSDEDIEPLLQDSNIWELSSEEPGNQCTEL) are extracellular. Polar residues predominate over residues 462 to 473 (KHNNSISGSLST). Residues 462–483 (KHNNSISGSLSTPPERGSDEDI) form a disordered region. Residue Asn464 is glycosylated (N-linked (GlcNAc...) asparagine).

Belongs to the major facilitator superfamily.

It localises to the membrane. The polypeptide is Hippocampus abundant transcript-like protein 1 (Rattus norvegicus (Rat)).